An 81-amino-acid polypeptide reads, in one-letter code: Exodeoxyribonuclease 7 small subunit (81 aa).

Belongs to the XseB family. As to quaternary structure, heterooligomer composed of large and small subunits.

It localises to the cytoplasm. It catalyses the reaction Exonucleolytic cleavage in either 5'- to 3'- or 3'- to 5'-direction to yield nucleoside 5'-phosphates.. Its function is as follows. Bidirectionally degrades single-stranded DNA into large acid-insoluble oligonucleotides, which are then degraded further into small acid-soluble oligonucleotides. The protein is Exodeoxyribonuclease 7 small subunit of Paramagnetospirillum magneticum (strain ATCC 700264 / AMB-1) (Magnetospirillum magneticum).